Here is a 223-residue protein sequence, read N- to C-terminus: Triosephosphate isomerase (223 aa).

6 to 8 provides a ligand contact to substrate; it reads NLK. Catalysis depends on histidine 86, which acts as the Electrophile. Glutamate 151 (proton acceptor) is an active-site residue. Residues glycine 157 and serine 187 each contribute to the substrate site.

Belongs to the triosephosphate isomerase family. Homodimer.

The protein localises to the cytoplasm. It catalyses the reaction D-glyceraldehyde 3-phosphate = dihydroxyacetone phosphate. The protein operates within carbohydrate biosynthesis; gluconeogenesis. Its pathway is carbohydrate degradation; glycolysis; D-glyceraldehyde 3-phosphate from glycerone phosphate: step 1/1. Involved in the gluconeogenesis. Catalyzes stereospecifically the conversion of dihydroxyacetone phosphate (DHAP) to D-glyceraldehyde-3-phosphate (G3P). The chain is Triosephosphate isomerase from Campylobacter jejuni subsp. jejuni serotype O:2 (strain ATCC 700819 / NCTC 11168).